The following is a 265-amino-acid chain: MDNRPIGFMDSGVGGLTVVKTAQKLLPNEEIIFIGDEARMPYGPRPTAEVVEFSRQMASFLMTKNIKALVIACNTATNAALAVLQAELPIPVIGVILPGAIAANRQTKNQKIGVIATLGTIKSEAYPKALAEINTKLRAYPVACQEFVEIAEKNELHTTAAQKVMNEKLAEFRQDQIDTLILGCTHFPLLEEGIQAAVGPDVTLVDPGVETVHQLIEILTKQALQHAEGPKAQDQYYSTGNIKNFEEIARTFLNQDLRVEEVKID.

Substrate-binding positions include 10-11 and 42-43; these read DS and YG. Cys-73 acts as the Proton donor/acceptor in catalysis. 74–75 serves as a coordination point for substrate; that stretch reads NT. Catalysis depends on Cys-184, which acts as the Proton donor/acceptor. Substrate is bound at residue 185–186; sequence TH.

The protein belongs to the aspartate/glutamate racemases family.

It carries out the reaction L-glutamate = D-glutamate. Its pathway is cell wall biogenesis; peptidoglycan biosynthesis. Functionally, provides the (R)-glutamate required for cell wall biosynthesis. The protein is Glutamate racemase of Pediococcus pentosaceus (strain ATCC 25745 / CCUG 21536 / LMG 10740 / 183-1w).